Consider the following 301-residue polypeptide: Nucleotide-binding protein Helmi_06460 (301 aa).

An ATP-binding site is contributed by 17-24 (GLSGAGKS). 68–71 (DIRG) is a GTP binding site.

It belongs to the RapZ-like family.

Displays ATPase and GTPase activities. This is Nucleotide-binding protein Helmi_06460 from Heliobacterium modesticaldum (strain ATCC 51547 / Ice1).